We begin with the raw amino-acid sequence, 474 residues long: Probable multidrug resistance protein NorM (474 aa).

Transmembrane regions (helical) follow at residues 33–50 (LWLA…IAMM), 65–87 (VAAA…GLVS), 108–130 (SLRV…QLYG), 150–172 (YLDG…GLMG), 179–201 (PALW…LIHG), 211–233 (FGAG…VVCV), 258–280 (LLQL…GAAA), 295–317 (QIAL…AATV), 334–356 (AGFA…VALT), 376–398 (TLTA…QVVA), 410–432 (VPLL…VLGF), and 436–458 (LGPF…LLVW).

The protein belongs to the multi antimicrobial extrusion (MATE) (TC 2.A.66.1) family.

The protein localises to the cell inner membrane. Functionally, multidrug efflux pump. This chain is Probable multidrug resistance protein NorM (norM), found in Rhodopseudomonas palustris (strain ATCC BAA-98 / CGA009).